A 156-amino-acid chain; its full sequence is Cyanate hydratase (156 aa).

Catalysis depends on residues R96, E99, and S122.

Belongs to the cyanase family.

The enzyme catalyses cyanate + hydrogencarbonate + 3 H(+) = NH4(+) + 2 CO2. Functionally, catalyzes the reaction of cyanate with bicarbonate to produce ammonia and carbon dioxide. In Burkholderia thailandensis (strain ATCC 700388 / DSM 13276 / CCUG 48851 / CIP 106301 / E264), this protein is Cyanate hydratase.